A 359-amino-acid chain; its full sequence is MTMENKPAGQNGLTYAQAGVDIDAGNLMVEKIKPLVRSTRRPGADGEIGGFGGLFDLKAAGFKDPVLVAANDGVGTKLKIAIDADIHDTVGIDLVAMCVNDLVVQGAEPLFFLDYYATGKLSPDQGVAIVSGIAEGCRQAGCALIGGETAEMPGMYRDGDYDLAGFAVGAAERDRLLPRGDIAEGDIILGLASSGVHSNGFSLVRRIVELSGLGWKSQAPFQPGATLGEALLTPTRIYVKPLLAAIRACDGIKALAHITGGGFPDNIPRVLPKGLAAEIDLPAIAVPPVFSWLAKTGNVEPNEMLRTFNCGIGMIAVVNPAKVDEVIAALAAEGEKVVTLGRMTRREKDGVIYKGQLAL.

This sequence belongs to the AIR synthase family.

Its subcellular location is the cytoplasm. The enzyme catalyses 2-formamido-N(1)-(5-O-phospho-beta-D-ribosyl)acetamidine + ATP = 5-amino-1-(5-phospho-beta-D-ribosyl)imidazole + ADP + phosphate + H(+). It functions in the pathway purine metabolism; IMP biosynthesis via de novo pathway; 5-amino-1-(5-phospho-D-ribosyl)imidazole from N(2)-formyl-N(1)-(5-phospho-D-ribosyl)glycinamide: step 2/2. The protein is Phosphoribosylformylglycinamidine cyclo-ligase of Brucella canis (strain ATCC 23365 / NCTC 10854 / RM-666).